Here is a 416-residue protein sequence, read N- to C-terminus: Gamma-glutamyl phosphate reductase (416 aa).

The protein belongs to the gamma-glutamyl phosphate reductase family.

It localises to the cytoplasm. It carries out the reaction L-glutamate 5-semialdehyde + phosphate + NADP(+) = L-glutamyl 5-phosphate + NADPH + H(+). It functions in the pathway amino-acid biosynthesis; L-proline biosynthesis; L-glutamate 5-semialdehyde from L-glutamate: step 2/2. Functionally, catalyzes the NADPH-dependent reduction of L-glutamate 5-phosphate into L-glutamate 5-semialdehyde and phosphate. The product spontaneously undergoes cyclization to form 1-pyrroline-5-carboxylate. In Streptococcus pyogenes serotype M3 (strain ATCC BAA-595 / MGAS315), this protein is Gamma-glutamyl phosphate reductase.